A 406-amino-acid polypeptide reads, in one-letter code: Heparan sulfate glucosamine 3-O-sulfotransferase 3A1 (406 aa).

The Cytoplasmic segment spans residues 1–24 (MAPPGPASALSTSAEPLSRSIFRK). The helical; Signal-anchor for type II membrane protein transmembrane segment at 25–43 (FLLMLCSLLTSLYVFYCLA) threads the bilayer. At 44–406 (ERCQTLSGPV…MTGHDFGWDG (363 aa)) the chain is on the lumenal side. Residues 92 to 102 (QLPQWRRRRPP) show a composition bias toward basic residues. The segment at 92-134 (QLPQWRRRRPPAPRDDGEEAAWEEESPGLSGGPGGSGAGSTVA) is disordered. Residues 107–117 (DGEEAAWEEES) show a composition bias toward acidic residues. Gly residues predominate over residues 120-129 (LSGGPGGSGA). Residue 162–166 (KGGTR) participates in 3'-phosphoadenylyl sulfate binding. Substrate contacts are provided by residues Arg166, 184–190 (EPHFFDR), and 215–218 (KTPS). 3'-phosphoadenylyl sulfate-binding residues include Arg243 and Ser251. 255–259 (QTLSK) contacts substrate. Asn273 carries an N-linked (GlcNAc...) asparagine glycan. 283-284 (WS) provides a ligand contact to substrate. N-linked (GlcNAc...) asparagine glycosylation is present at Asn344. Cys351 and Cys363 are oxidised to a cystine. A substrate-binding site is contributed by 367–370 (TKGR). Position 368 to 372 (368 to 372 (KGRTH)) interacts with 3'-phosphoadenylyl sulfate.

Belongs to the sulfotransferase 1 family. Ubiquitous. Most abundant in heart and placenta, followed by liver and kidney.

Its subcellular location is the golgi apparatus membrane. The enzyme catalyses alpha-D-glucosaminyl-[heparan sulfate](n) + 3'-phosphoadenylyl sulfate = 3-sulfo-alpha-D-glucosaminyl-[heparan sulfate](n) + adenosine 3',5'-bisphosphate + H(+). Its function is as follows. Sulfotransferase that utilizes 3'-phospho-5'-adenylyl sulfate (PAPS) to catalyze the transfer of a sulfo group to an N-unsubstituted glucosamine linked to a 2-O-sulfo iduronic acid unit on heparan sulfate. Catalyzes the O-sulfation of glucosamine in IdoUA2S-GlcNS and also in IdoUA2S-GlcNH2. The substrate-specific O-sulfation generates an enzyme-modified heparan sulfate which acts as a binding receptor to Herpes simplex virus-1 (HSV-1) and permits its entry. Unlike HS3ST1/3-OST-1, does not convert non-anticoagulant heparan sulfate to anticoagulant heparan sulfate. This Homo sapiens (Human) protein is Heparan sulfate glucosamine 3-O-sulfotransferase 3A1 (HS3ST3A1).